We begin with the raw amino-acid sequence, 80 residues long: MKRILIAPVRFYQRFISPVFPPSCRFELTCSNYMIQAIEKHGFKGVLMGLSRILRCHPWSKTGKDPVPDRFSLKRNQEGE.

The interval 61–80 is disordered; the sequence is KTGKDPVPDRFSLKRNQEGE. The segment covering 62-80 has biased composition (basic and acidic residues); that stretch reads TGKDPVPDRFSLKRNQEGE.

The protein belongs to the UPF0161 family.

Its subcellular location is the cell membrane. In terms of biological role, could be involved in insertion of integral membrane proteins into the membrane. This is Putative membrane protein insertion efficiency factor from Streptococcus pneumoniae (strain P1031).